The primary structure comprises 179 residues: ATP synthase subunit delta, chloroplastic (179 aa).

This sequence belongs to the ATPase delta chain family. As to quaternary structure, F-type ATPases have 2 components, F(1) - the catalytic core - and F(0) - the membrane proton channel. F(1) has five subunits: alpha(3), beta(3), gamma(1), delta(1), epsilon(1). CF(0) has four main subunits: a(1), b(1), b'(1) and c(10-14). The alpha and beta chains form an alternating ring which encloses part of the gamma chain. F(1) is attached to F(0) by a central stalk formed by the gamma and epsilon chains, while a peripheral stalk is formed by the delta, b and b' chains.

It localises to the plastid. It is found in the chloroplast thylakoid membrane. F(1)F(0) ATP synthase produces ATP from ADP in the presence of a proton or sodium gradient. F-type ATPases consist of two structural domains, F(1) containing the extramembraneous catalytic core and F(0) containing the membrane proton channel, linked together by a central stalk and a peripheral stalk. During catalysis, ATP synthesis in the catalytic domain of F(1) is coupled via a rotary mechanism of the central stalk subunits to proton translocation. Functionally, this protein is part of the stalk that links CF(0) to CF(1). It either transmits conformational changes from CF(0) to CF(1) or is implicated in proton conduction. The chain is ATP synthase subunit delta, chloroplastic from Ochrosphaera neapolitana.